The following is a 440-amino-acid chain: Thymidine phosphorylase (440 aa).

This sequence belongs to the thymidine/pyrimidine-nucleoside phosphorylase family. Homodimer.

The enzyme catalyses thymidine + phosphate = 2-deoxy-alpha-D-ribose 1-phosphate + thymine. Its pathway is pyrimidine metabolism; dTMP biosynthesis via salvage pathway; dTMP from thymine: step 1/2. In terms of biological role, the enzymes which catalyze the reversible phosphorolysis of pyrimidine nucleosides are involved in the degradation of these compounds and in their utilization as carbon and energy sources, or in the rescue of pyrimidine bases for nucleotide synthesis. The sequence is that of Thymidine phosphorylase from Serratia proteamaculans (strain 568).